We begin with the raw amino-acid sequence, 725 residues long: Non-structural protein 4 (725 aa).

Disordered stretches follow at residues 1–26 (MSKG…GNRN) and 666–725 (DEVE…TKDE). A compositionally biased stretch (polar residues) spans 7–16 (TVTSLVSGPP). The segment covering 675–686 (ENQKQELDAKSD) has biased composition (basic and acidic residues). Positions 687–709 (DVEESSVEGEEDDDGSSASEETD) are enriched in acidic residues.

The protein is Non-structural protein 4 of Rice gall dwarf virus (RGDV).